A 255-amino-acid polypeptide reads, in one-letter code: MSSHRRKAKGRNRRSHRAMRVAHLELATYELAATESNPESSHPGYEAAMADRPQPGWRESLKMRVSKPFGMLMLSIWILLFVCYYLSYYLCSGSSYFVLANGHILPNSENAHGQSLEEDSALEALLNFFFPTTCNLRENQVAKPCNELQDLSESECLRHKCCFSSSGTTSFKCFAPFRDVPKQMMQMFGLGAISLILVCLPIYCRSLFWRSEPADDLQRQDNRVVTGLKKQRRKRKRKSEMLQKAARGREEHGDE.

Residues 1–68 (MSSHRRKAKG…ESLKMRVSKP (68 aa)) are Cytoplasmic-facing. Residues 69–89 (FGMLMLSIWILLFVCYYLSYY) form a helical membrane-spanning segment. The Extracellular segment spans residues 90 to 183 (LCSGSSYFVL…FAPFRDVPKQ (94 aa)). The region spanning 125-184 (LLNFFFPTTCNLRENQVAKPCNELQDLSESECLRHKCCFSSSGTTSFKCFAPFRDVPKQM) is the P-type domain. Residues 184-204 (MMQMFGLGAISLILVCLPIYC) form a helical membrane-spanning segment. Topologically, residues 205–255 (RSLFWRSEPADDLQRQDNRVVTGLKKQRRKRKRKSEMLQKAARGREEHGDE) are cytoplasmic. Positions 220-255 (QDNRVVTGLKKQRRKRKRKSEMLQKAARGREEHGDE) are disordered. The segment covering 229–238 (KKQRRKRKRK) has biased composition (basic residues).

Testis-specific. Expressed in melanoma, sarcoma, lung, breast, bladder, esophageal and ovarian cancers.

The protein resides in the membrane. The protein is FMR1 neighbor protein of Homo sapiens (Human).